The sequence spans 78 residues: MGSLSIWHWIVVLAVVLLLFGRGKISDLMGDVAKGIKSFKKGLAEDDEPAKTPAAPPEAPRPLPHQTSSAAEAEKKPV.

The helical transmembrane segment at 1–21 threads the bilayer; it reads MGSLSIWHWIVVLAVVLLLFG. The tract at residues 43–78 is disordered; it reads LAEDDEPAKTPAAPPEAPRPLPHQTSSAAEAEKKPV. Pro residues predominate over residues 54–63; that stretch reads AAPPEAPRPL.

Belongs to the TatA/E family. In terms of assembly, the Tat system comprises two distinct complexes: a TatABC complex, containing multiple copies of TatA, TatB and TatC subunits, and a separate TatA complex, containing only TatA subunits. Substrates initially bind to the TatABC complex, which probably triggers association of the separate TatA complex to form the active translocon.

The protein resides in the cell inner membrane. Its function is as follows. Part of the twin-arginine translocation (Tat) system that transports large folded proteins containing a characteristic twin-arginine motif in their signal peptide across membranes. TatA could form the protein-conducting channel of the Tat system. This chain is Sec-independent protein translocase protein TatA, found in Xanthobacter autotrophicus (strain ATCC BAA-1158 / Py2).